The chain runs to 367 residues: Pectate lyase 1 (367 aa).

The N-terminal stretch at Met1–Ser21 is a signal peptide. 2 disulfide bridges follow: Cys28/Cys45 and Cys128/Cys147. Residue Asn148 is glycosylated (N-linked (GlcNAc...) asparagine). Residue Asp170 participates in Ca(2+) binding. Asn178 carries an N-linked (GlcNAc...) asparagine glycan. Ca(2+) is bound by residues Asp194 and Asp198. Arg250 is an active-site residue. N-linked (GlcNAc...) asparagine glycosylation occurs at Asn293. A disulfide bridge links Cys306 with Cys312.

Belongs to the polysaccharide lyase 1 family. Amb a subfamily. Requires Ca(2+) as cofactor.

The enzyme catalyses Eliminative cleavage of (1-&gt;4)-alpha-D-galacturonan to give oligosaccharides with 4-deoxy-alpha-D-galact-4-enuronosyl groups at their non-reducing ends.. The protein operates within glycan metabolism; pectin degradation; 2-dehydro-3-deoxy-D-gluconate from pectin: step 2/5. Its function is as follows. Has pectate lyase activity. The protein is Pectate lyase 1 of Hesperocyparis arizonica (Arizona cypress).